The primary structure comprises 251 residues: Imidazole glycerol phosphate synthase subunit HisF (251 aa).

Catalysis depends on residues aspartate 11 and aspartate 130.

This sequence belongs to the HisA/HisF family. In terms of assembly, heterodimer of HisH and HisF.

It localises to the cytoplasm. It carries out the reaction 5-[(5-phospho-1-deoxy-D-ribulos-1-ylimino)methylamino]-1-(5-phospho-beta-D-ribosyl)imidazole-4-carboxamide + L-glutamine = D-erythro-1-(imidazol-4-yl)glycerol 3-phosphate + 5-amino-1-(5-phospho-beta-D-ribosyl)imidazole-4-carboxamide + L-glutamate + H(+). It participates in amino-acid biosynthesis; L-histidine biosynthesis; L-histidine from 5-phospho-alpha-D-ribose 1-diphosphate: step 5/9. Its function is as follows. IGPS catalyzes the conversion of PRFAR and glutamine to IGP, AICAR and glutamate. The HisF subunit catalyzes the cyclization activity that produces IGP and AICAR from PRFAR using the ammonia provided by the HisH subunit. This Chloroherpeton thalassium (strain ATCC 35110 / GB-78) protein is Imidazole glycerol phosphate synthase subunit HisF.